Reading from the N-terminus, the 73-residue chain is Mitofissin (73 aa).

It belongs to the ?ATG44? family. In terms of assembly, homooligomer. Found as homooctamer in solution, but binds to membranes either as a monomer, dimer, or tetramer, not as an octamer.

It is found in the mitochondrion intermembrane space. The protein localises to the vacuole. Its function is as follows. Mitochondrial fission factor that acts directly on lipid membranes to drive mitochondrial fission required for mitophagy. Directly binds to lipid membranes and brings about lipid membrane fragility to facilitate membrane fission and engulfment of mitochondria by the phagophore. This is Mitofissin from Saccharomyces cerevisiae (strain ATCC 204508 / S288c) (Baker's yeast).